Here is a 279-residue protein sequence, read N- to C-terminus: Tryptophan 2,3-dioxygenase (279 aa).

Residues 48–52 (FIIQH), tyrosine 110, and arginine 114 each bind substrate. Histidine 237 is a binding site for heme. Threonine 251 is a substrate binding site.

It belongs to the tryptophan 2,3-dioxygenase family. As to quaternary structure, homotetramer. Requires heme as cofactor.

The enzyme catalyses L-tryptophan + O2 = N-formyl-L-kynurenine. Its pathway is amino-acid degradation; L-tryptophan degradation via kynurenine pathway; L-kynurenine from L-tryptophan: step 1/2. Its function is as follows. Heme-dependent dioxygenase that catalyzes the oxidative cleavage of the L-tryptophan (L-Trp) pyrrole ring and converts L-tryptophan to N-formyl-L-kynurenine. Catalyzes the oxidative cleavage of the indole moiety. This Bradyrhizobium sp. (strain ORS 278) protein is Tryptophan 2,3-dioxygenase.